The primary structure comprises 296 residues: Polyamine aminopropyltransferase (296 aa).

Residues 5–238 (ELWYETLHAN…GIMTFAWATQ (234 aa)) form the PABS domain. Q33 is an S-methyl-5'-thioadenosine binding site. Residues H64 and D88 each contribute to the spermidine site. S-methyl-5'-thioadenosine contacts are provided by residues E108 and 140–141 (DG). D158 (proton acceptor) is an active-site residue. 158–161 (DCTD) is a binding site for spermidine. P165 contacts S-methyl-5'-thioadenosine.

It belongs to the spermidine/spermine synthase family. Homodimer or homotetramer.

It localises to the cytoplasm. It carries out the reaction S-adenosyl 3-(methylsulfanyl)propylamine + putrescine = S-methyl-5'-thioadenosine + spermidine + H(+). Its pathway is amine and polyamine biosynthesis; spermidine biosynthesis; spermidine from putrescine: step 1/1. In terms of biological role, catalyzes the irreversible transfer of a propylamine group from the amino donor S-adenosylmethioninamine (decarboxy-AdoMet) to putrescine (1,4-diaminobutane) to yield spermidine. This is Polyamine aminopropyltransferase from Yersinia pseudotuberculosis serotype O:3 (strain YPIII).